Consider the following 456-residue polypeptide: Gamma-aminobutyric acid receptor subunit alpha-1 (456 aa).

The signal sequence occupies residues 1–27; that stretch reads MRKSPGLSDCLWAWILLLSTLTGRSYG. Over 28-253 the chain is Extracellular; sequence QPSLQDELKD…FHLKRKIGYF (226 aa). Residue Asn38 is glycosylated (N-linked (GlcNAc...) asparagine). Arg94 lines the 4-aminobutanoate pocket. Asn138 carries N-linked (GlcNAc...) asparagine glycosylation. A 4-aminobutanoate-binding site is contributed by Thr157. A disulfide bond links Cys166 and Cys180. The helical transmembrane segment at 254-274 threads the bilayer; sequence VIQTYLPCIMTVILSQVSFWL. Residue Trp273 coordinates 3alpha-hydroxy-5alpha-pregnan-11,20-dione. Residues 275 to 279 are Cytoplasmic-facing; that stretch reads NRESV. The helical transmembrane segment at 280–301 threads the bilayer; it reads PARTVFGVTTVLTMTTLSISAR. Residues 302-311 lie on the Extracellular side of the membrane; the sequence is NSLPKVAYAT. Residues 312-333 form a helical membrane-spanning segment; it reads AMDWFIAVCYAFVFSALIEFAT. Residues 334–421 are Cytoplasmic-facing; the sequence is VNYFTKRGYA…TFNSVSKIDR (88 aa). The chain crosses the membrane as a helical span at residues 422 to 441; sequence LSRIAFPLLFGIFNLVYWAT. Over 442-456 the chain is Extracellular; that stretch reads YLNREPQLKAPTPHQ.

It belongs to the ligand-gated ion channel (TC 1.A.9) family. Gamma-aminobutyric acid receptor (TC 1.A.9.5) subfamily. GABRA1 sub-subfamily. As to quaternary structure, heteropentamer, formed by a combination of alpha (GABRA1-6), beta (GABRB1-3), gamma (GABRG1-3), delta (GABRD), epsilon (GABRE), rho (GABRR1-3), pi (GABRP) and theta (GABRQ) subunits, each subunit exhibiting distinct physiological and pharmacological properties. Interacts with UBQLN1. Interacts with TRAK1. Interacts with KIF21B. Identified in a complex of 720 kDa composed of LHFPL4, NLGN2, GABRA1, GABRB2, GABRG2 and GABRB3. Interacts with LHFPL4. Interacts with NLGN2. Interacts with SHISA7; interaction leads regulation of GABAAR trafficking, channel deactivation kinetics and pharmacology.

The protein resides in the postsynaptic cell membrane. It is found in the cell membrane. It localises to the cytoplasmic vesicle membrane. It catalyses the reaction chloride(in) = chloride(out). Its activity is regulated as follows. Allosterically activated by benzodiazepines and the anesthetic alphaxalone. Allosterically activated by pentobarbital. Inhibited by the antagonist bicuculline. Potentiated by histamine. Its function is as follows. Alpha subunit of the heteropentameric ligand-gated chloride channel gated by Gamma-aminobutyric acid (GABA), a major inhibitory neurotransmitter in the brain. GABA-gated chloride channels, also named GABA(A) receptors (GABAAR), consist of five subunits arranged around a central pore and contain GABA active binding site(s) located at the alpha and beta subunit interface(s). When activated by GABA, GABAARs selectively allow the flow of chloride anions across the cell membrane down their electrochemical gradient. Alpha-1/GABRA1-containing GABAARs are largely synaptic. Chloride influx into the postsynaptic neuron following GABAAR opening decreases the neuron ability to generate a new action potential, thereby reducing nerve transmission. GABAARs containing alpha-1 and beta-2 or -3 subunits exhibit synaptogenic activity; the gamma-2 subunit being necessary but not sufficient to induce rapid synaptic contacts formation. GABAARs function also as histamine receptor where histamine binds at the interface of two neighboring beta subunits and potentiates GABA response. GABAARs containing alpha, beta and epsilon subunits also permit spontaneous chloride channel activity while preserving the structural information required for GABA-gated openings. Alpha-1-mediated plasticity in the orbitofrontal cortex regulates context-dependent action selection. Together with rho subunits, may also control neuronal and glial GABAergic transmission in the cerebellum. This is Gamma-aminobutyric acid receptor subunit alpha-1 from Homo sapiens (Human).